The following is a 485-amino-acid chain: Glutamate--tRNA ligase (485 aa).

The 'HIGH' region motif lies at 11 to 21 (PSPTGYMHVGN). Zn(2+) is bound by residues Cys108, Cys110, Cys135, and Asp137. Residues 252–256 (KLSKR) carry the 'KMSKS' region motif. Lys255 contacts ATP.

The protein belongs to the class-I aminoacyl-tRNA synthetase family. Glutamate--tRNA ligase type 1 subfamily. Monomer. The cofactor is Zn(2+).

Its subcellular location is the cytoplasm. The enzyme catalyses tRNA(Glu) + L-glutamate + ATP = L-glutamyl-tRNA(Glu) + AMP + diphosphate. Its function is as follows. Catalyzes the attachment of glutamate to tRNA(Glu) in a two-step reaction: glutamate is first activated by ATP to form Glu-AMP and then transferred to the acceptor end of tRNA(Glu). The chain is Glutamate--tRNA ligase from Clostridium botulinum (strain Okra / Type B1).